Here is a 937-residue protein sequence, read N- to C-terminus: Isoleucine--tRNA ligase (937 aa).

Residues 58-68 carry the 'HIGH' region motif; sequence PYANGSIHIGH. Residue Glu561 participates in L-isoleucyl-5'-AMP binding. The 'KMSKS' region signature appears at 602 to 606; the sequence is KMSKS. Residue Lys605 participates in ATP binding. Residues Cys900, Cys903, Cys920, and Cys923 each contribute to the Zn(2+) site.

This sequence belongs to the class-I aminoacyl-tRNA synthetase family. IleS type 1 subfamily. As to quaternary structure, monomer. Zn(2+) serves as cofactor.

The protein localises to the cytoplasm. The enzyme catalyses tRNA(Ile) + L-isoleucine + ATP = L-isoleucyl-tRNA(Ile) + AMP + diphosphate. Catalyzes the attachment of isoleucine to tRNA(Ile). As IleRS can inadvertently accommodate and process structurally similar amino acids such as valine, to avoid such errors it has two additional distinct tRNA(Ile)-dependent editing activities. One activity is designated as 'pretransfer' editing and involves the hydrolysis of activated Val-AMP. The other activity is designated 'posttransfer' editing and involves deacylation of mischarged Val-tRNA(Ile). The protein is Isoleucine--tRNA ligase of Pectobacterium carotovorum subsp. carotovorum (strain PC1).